The following is a 362-amino-acid chain: 3-dehydroquinate synthase (362 aa).

Residues D71 to K76, G105 to D109, T129 to T130, K142, K151, and C169 to T172 contribute to the NAD(+) site. 3 residues coordinate Zn(2+): E184, H248, and H265.

It belongs to the sugar phosphate cyclases superfamily. Dehydroquinate synthase family. It depends on Co(2+) as a cofactor. The cofactor is Zn(2+). Requires NAD(+) as cofactor.

The protein resides in the cytoplasm. The enzyme catalyses 7-phospho-2-dehydro-3-deoxy-D-arabino-heptonate = 3-dehydroquinate + phosphate. It participates in metabolic intermediate biosynthesis; chorismate biosynthesis; chorismate from D-erythrose 4-phosphate and phosphoenolpyruvate: step 2/7. Its function is as follows. Catalyzes the conversion of 3-deoxy-D-arabino-heptulosonate 7-phosphate (DAHP) to dehydroquinate (DHQ). This Yersinia pseudotuberculosis serotype O:1b (strain IP 31758) protein is 3-dehydroquinate synthase.